The primary structure comprises 407 residues: Odorant receptor 67a (407 aa).

Residues 1–40 are Cytoplasmic-facing; sequence MDNVAEMPEEKYVEVDDFLRLAVKFYNTLGIDPYETGRKR. The chain crosses the membrane as a helical span at residues 41–61; it reads TIWFQIYFALNMFNMVFSFYA. At 62-79 the chain is on the extracellular side; it reads EVATLVDRLRDNENFLES. The chain crosses the membrane as a helical span at residues 80 to 100; sequence CILLSYVSFVVMGLSKIGAVM. The Cytoplasmic portion of the chain corresponds to 101-144; that stretch reads KKKPKMTALVRQLETCFPSPSAKVQEEYAVKSWLKRCHIYTKGF. A helical transmembrane segment spans residues 145 to 165; sequence GGLFMIMYFAHALIPLFIYFI. Residues 166-208 lie on the Extracellular side of the membrane; the sequence is QRVLLHYPDAKQIMPFYQLEPWEFRDSWLFYPSYFHQSSAGYT. The helical transmembrane segment at 209 to 229 threads the bilayer; that stretch reads ATCGSIAGDLMIFAVVLQVIM. At 230–278 the chain is on the cytoplasmic side; that stretch reads HYERLAKVLREFKIQAHNAPNGAKEDIRKLQSLVANHIDILRLTDLMNE. A helical transmembrane segment spans residues 279 to 300; it reads VFGIPLLLNFIASALLVCLVGV. Residues 301–314 lie on the Extracellular side of the membrane; it reads QLTIALSPEYFCKQ. The chain crosses the membrane as a helical span at residues 315-331; it reads MLFLISVLLEVYLLCSF. Topologically, residues 332 to 378 are cytoplasmic; it reads SQRLIDASENVGHAAYDMDWLGSDKRFKKILIFISMRSQKPVCLKAT. The chain crosses the membrane as a helical span at residues 379 to 401; it reads VVLDLSMPTMSIFLGMSYKFFCA. Over 402–407 the chain is Extracellular; sequence VRTMYQ.

Belongs to the insect chemoreceptor superfamily. Heteromeric odorant receptor channel (TC 1.A.69) family. Or49a subfamily. As to quaternary structure, interacts with Orco. Complexes exist early in the endomembrane system in olfactory sensory neurons (OSNs), coupling these complexes to the conserved ciliary trafficking pathway. As to expression, expressed in olfactory sensory neurons in the antenna.

It localises to the cell membrane. In terms of biological role, odorant receptor which mediates acceptance or avoidance behavior, depending on its substrates. The odorant receptor repertoire encodes a large collection of odor stimuli that vary widely in identity, intensity, and duration. Forms a complex with Orco to form odorant-sensing units, providing sensitive and prolonged odorant signaling and calcium permeability. Involved in the behavioral responses to benzaldehyde and acetophenone. The sequence is that of Odorant receptor 67a (Or67a) from Drosophila melanogaster (Fruit fly).